We begin with the raw amino-acid sequence, 380 residues long: Cytochrome b (380 aa).

The next 4 membrane-spanning stretches (helical) occupy residues 33–53 (FGSLLGLCLVTQILTGLFLAM), 77–98 (WLIRNIHANGASFFFICLYLHV), 113–133 (WNIGVILLLLTMMTAFVGYVL), and 178–198 (FFAFHFLLPFVIAGASMIHLL). Residues histidine 83 and histidine 97 each coordinate heme b. Heme b is bound by residues histidine 182 and histidine 196. Histidine 201 serves as a coordination point for a ubiquinone. Helical transmembrane passes span 226 to 246 (YKDLFGFILMLVGLTSVALFS), 288 to 308 (LGGVLALLFSILVLMLVPMLH), 320 to 340 (PSQILFWALVADMLVLTWIGG), and 347 to 367 (FVLIGQVASTIYFALFLIALP).

It belongs to the cytochrome b family. As to quaternary structure, the cytochrome bc1 complex contains 3 respiratory subunits (MT-CYB, CYC1 and UQCRFS1), 2 core proteins (UQCRC1 and UQCRC2) and probably 6 low-molecular weight proteins. It depends on heme b as a cofactor.

Its subcellular location is the mitochondrion inner membrane. Component of the ubiquinol-cytochrome c reductase complex (complex III or cytochrome b-c1 complex) that is part of the mitochondrial respiratory chain. The b-c1 complex mediates electron transfer from ubiquinol to cytochrome c. Contributes to the generation of a proton gradient across the mitochondrial membrane that is then used for ATP synthesis. This chain is Cytochrome b (mt-cyb), found in Acipenser sinensis (Chinese sturgeon).